The primary structure comprises 670 residues: Sodium/potassium/calcium exchanger 2 (670 aa).

The Cytoplasmic segment spans residues 1–38; it reads MDLHQSATVRLLQEWCSHESPSGCRRHYNTRKKLKLIR. The chain crosses the membrane as a helical span at residues 39–59; it reads VIGLVMGLVAVSTVPFSISAF. Residues 60 to 133 lie on the Extracellular side of the membrane; the sequence is TETYSQNNRG…DVFSLEERRK (74 aa). Disordered stretches follow at residues 67–86 and 91–122; these read NRGE…HRQR and LNDK…GDYP. Residues 106–122 show a composition bias toward basic and acidic residues; it reads QEDRSENGTDHAQGDYP. N-linked (GlcNAc...) asparagine glycosylation is present at Asn-112. A helical membrane pass occupies residues 134 to 154; sequence GAIILHVIGMIYMFIALAIVC. The Cytoplasmic portion of the chain corresponds to 155-179; the sequence is DEFFVPSLTVITEKLGISDDVAGAT. The Alpha-1 repeat unit spans residues 175–215; the sequence is VAGATFMAAGGSAPELFTSLIGVFIAHSNVGIGTIVGSAVF. The helical transmembrane segment at 180–200 threads the bilayer; it reads FMAAGGSAPELFTSLIGVFIA. Topologically, residues 201 to 205 are extracellular; sequence HSNVG. Residues 206-226 form a helical membrane-spanning segment; sequence IGTIVGSAVFNILFVIGMCAL. The Cytoplasmic segment spans residues 227-244; it reads FSREILNLTWWPLFRDVS. A helical membrane pass occupies residues 245-265; the sequence is FYIVDLIMLIIFFLDNVIMWW. A topological domain (extracellular) is located at residue Glu-266. The helical transmembrane segment at 267–287 threads the bilayer; that stretch reads SLLLLTAYFAYVVFMKFNVQV. The Cytoplasmic segment spans residues 288–506; that stretch reads ERWVKQMINR…PDVRKPASKK (219 aa). The tract at residues 312–335 is disordered; it reads ASTAGDKEEPTLPNKPRLQRGGSS. Phosphoserine is present on residues Ser-337 and Ser-341. Disordered regions lie at residues 394–414 and 450–471; these read KCQV…DYAA and AADA…LSLS. A helical transmembrane segment spans residues 507–527; it reads FFPITFFGSITWIAVFSYLMV. Residues 528–542 lie on the Extracellular side of the membrane; it reads WWAHQVGETIGISEE. The chain crosses the membrane as a helical span at residues 543 to 563; that stretch reads IMGLTILAAGTSIPDLITSVI. The Alpha-2 repeat unit spans residues 550–581; sequence AAGTSIPDLITSVIVARKGLGDMAVSSSVGSN. Residues 564–578 lie on the Cytoplasmic side of the membrane; that stretch reads VARKGLGDMAVSSSV. Residues 579–599 form a helical membrane-spanning segment; it reads GSNIFDITVGLPLPWLLYTII. Topologically, residues 600–611 are extracellular; the sequence is HRFKPVTVSSNG. Residues 612–632 form a helical membrane-spanning segment; it reads LFCAIVLLFIMLIFVILSIAL. The Cytoplasmic segment spans residues 633 to 639; the sequence is CKWRMNK. Residues 640 to 660 traverse the membrane as a helical segment; that stretch reads ILGFIMFGLYFAFLVVSVLLE. The Extracellular portion of the chain corresponds to 661–670; that stretch reads DKVLECPVSI.

It belongs to the Ca(2+):cation antiporter (CaCA) (TC 2.A.19) family. SLC24A subfamily. Expressed abundantly in all regions of the brain and weakly in the eye, large intestine and adrenal tissue.

It localises to the cell membrane. It catalyses the reaction Ca(2+)(out) + K(+)(out) + 4 Na(+)(in) = Ca(2+)(in) + K(+)(in) + 4 Na(+)(out). In terms of biological role, calcium, potassium:sodium antiporter that transports 1 Ca(2+) and 1 K(+) in exchange for 4 Na(+). Required for learming and memory by regulating neuronal Ca(2+), which is essential for the development of synaptic plasticity. The sequence is that of Sodium/potassium/calcium exchanger 2 (Slc24a2) from Rattus norvegicus (Rat).